The chain runs to 93 residues: Small ribosomal subunit protein uS19 (93 aa).

The protein belongs to the universal ribosomal protein uS19 family.

Protein S19 forms a complex with S13 that binds strongly to the 16S ribosomal RNA. The chain is Small ribosomal subunit protein uS19 from Kocuria rhizophila (strain ATCC 9341 / DSM 348 / NBRC 103217 / DC2201).